Consider the following 283-residue polypeptide: Protein/nucleic acid deglycase HchA (283 aa).

Residues histidine 86, glutamate 91, and histidine 123 each contribute to the Zn(2+) site. Cysteine 185 functions as the Nucleophile in the catalytic mechanism.

The protein belongs to the peptidase C56 family. HchA subfamily. As to quaternary structure, homodimer.

The protein localises to the cytoplasm. It catalyses the reaction N(omega)-(1-hydroxy-2-oxopropyl)-L-arginyl-[protein] + H2O = lactate + L-arginyl-[protein] + H(+). The catalysed reaction is N(6)-(1-hydroxy-2-oxopropyl)-L-lysyl-[protein] + H2O = lactate + L-lysyl-[protein] + H(+). The enzyme catalyses S-(1-hydroxy-2-oxopropyl)-L-cysteinyl-[protein] + H2O = lactate + L-cysteinyl-[protein] + H(+). It carries out the reaction N(omega)-(1-hydroxy-2-oxoethyl)-L-arginyl-[protein] + H2O = L-arginyl-[protein] + glycolate + H(+). It catalyses the reaction N(6)-(1-hydroxy-2-oxoethyl)-L-lysyl-[protein] + H2O = glycolate + L-lysyl-[protein] + H(+). The catalysed reaction is S-(1-hydroxy-2-oxoethyl)-L-cysteinyl-[protein] + H2O = glycolate + L-cysteinyl-[protein] + H(+). The enzyme catalyses N(2)-(1-hydroxy-2-oxopropyl)-dGTP + H2O = lactate + dGTP + H(+). It carries out the reaction N(2)-(1-hydroxy-2-oxopropyl)-GTP + H2O = lactate + GTP + H(+). It catalyses the reaction N(2)-(1-hydroxy-2-oxopropyl)-GDP + H2O = lactate + GDP + H(+). The catalysed reaction is N(2)-(1-hydroxy-2-oxopropyl)-GMP + H2O = lactate + GMP + H(+). The enzyme catalyses N(2)-(1-hydroxy-2-oxoethyl)-dGTP + H2O = dGTP + glycolate + H(+). It carries out the reaction N(2)-(1-hydroxy-2-oxoethyl)-GTP + H2O = glycolate + GTP + H(+). It catalyses the reaction N(2)-(1-hydroxy-2-oxoethyl)-GDP + H2O = glycolate + GDP + H(+). The catalysed reaction is N(2)-(1-hydroxy-2-oxoethyl)-GMP + H2O = glycolate + GMP + H(+). The enzyme catalyses an N(2)-(1-hydroxy-2-oxopropyl)-guanosine in RNA + H2O = a guanosine in RNA + lactate + H(+). It carries out the reaction an N(2)-(1-hydroxy-2-oxopropyl)-2'-deoxyguanosine in DNA + H2O = a 2'-deoxyguanosine in DNA + lactate + H(+). It catalyses the reaction an N(2)-(1-hydroxy-2-oxoethyl)-guanosine in RNA + H2O = a guanosine in RNA + glycolate + H(+). The catalysed reaction is an N(2)-(1-hydroxy-2-oxoethyl)-2'-deoxyguanosine in DNA + H2O = a 2'-deoxyguanosine in DNA + glycolate + H(+). In terms of biological role, protein and nucleotide deglycase that catalyzes the deglycation of the Maillard adducts formed between amino groups of proteins or nucleotides and reactive carbonyl groups of glyoxals. Thus, functions as a protein deglycase that repairs methylglyoxal- and glyoxal-glycated proteins, and releases repaired proteins and lactate or glycolate, respectively. Deglycates cysteine, arginine and lysine residues in proteins, and thus reactivates these proteins by reversing glycation by glyoxals. Acts on early glycation intermediates (hemithioacetals and aminocarbinols), preventing the formation of Schiff bases and advanced glycation endproducts (AGE). Also functions as a nucleotide deglycase able to repair glycated guanine in the free nucleotide pool (GTP, GDP, GMP, dGTP) and in DNA and RNA. Is thus involved in a major nucleotide repair system named guanine glycation repair (GG repair), dedicated to reversing methylglyoxal and glyoxal damage via nucleotide sanitization and direct nucleic acid repair. Plays an important role in protecting cells from carbonyl stress. In Escherichia coli O81 (strain ED1a), this protein is Protein/nucleic acid deglycase HchA.